Consider the following 390-residue polypeptide: Period circadian protein (390 aa).

Disordered regions lie at residues 27-120 (VTAP…APPV), 164-188 (LEYS…WEGE), 247-266 (GGNG…STNQ), and 327-356 (SPSG…TSQA). Gly residues predominate over residues 93 to 114 (GTSGTGNSGDGGGGGGADGTGS). A compositionally biased stretch (gly residues) spans 247-256 (GGNGNVGSGN).

In terms of assembly, forms a heterodimer with timeless (TIM); the complex then translocates into the nucleus. In terms of processing, phosphorylated with a circadian rhythmicity, probably by the double-time protein (dbt). Phosphorylation could be implicated in the stability of per monomer and in the formation of heterodimer per-tim.

Its subcellular location is the nucleus. The protein resides in the cytoplasm. It is found in the perinuclear region. In terms of biological role, essential for biological clock functions. Determines the period length of circadian and ultradian rhythms; an increase in PER dosage leads to shortened circadian rhythms and a decrease leads to lengthened circadian rhythms. Essential for the circadian rhythmicity of locomotor activity, eclosion behavior, and for the rhythmic component of the male courtship song that originates in the thoracic nervous system. The biological cycle depends on the rhythmic formation and nuclear localization of the TIM-PER complex. Light induces the degradation of TIM, which promotes elimination of PER. Nuclear activity of the heterodimer coordinatively regulates PER and TIM transcription through a negative feedback loop. Behaves as a negative element in circadian transcriptional loop. Does not appear to bind DNA, suggesting indirect transcriptional inhibition. This is Period circadian protein (per) from Drosophila tropicalis (Fruit fly).